Here is a 579-residue protein sequence, read N- to C-terminus: Rho guanine nucleotide exchange factor 25 (579 aa).

Disordered stretches follow at residues 27-61 (AVPG…GERE) and 172-194 (VKAQ…EQKK). Positions 199 to 375 (RSMFVLSELV…CFVPKRCNDM (177 aa)) constitute a DH domain. Residues 317-338 (LGHRLQLSDLLIKPVQRIMKYQ) form an important for binding to Rho GTPases region. A PH domain is found at 380–499 (RLRGFEGKLT…ESQTNSLGRS (120 aa)). The segment at 472 to 498 (SQRDFLNALQSPIEYQRRESQTNSLGR) is sufficient to bind activated GNAQ. 2 disordered regions span residues 487–516 (QRRE…VSMH) and 546–579 (LSET…EDEL).

As to quaternary structure, interacts with activated GNAQ and GNA11. Interacts with RHOA, CDC42 and RAC1. Interacts (via the DH domain) with POPDC1 (via the C-terminus cytoplasmic tail).

The protein localises to the cytoplasm. It is found in the myofibril. The protein resides in the sarcomere. It localises to the cell membrane. Its function is as follows. May play a role in actin cytoskeleton reorganization in different tissues since its activation induces formation of actin stress fibers. It works as a guanine nucleotide exchange factor for Rho family of small GTPases. Links specifically G alpha q/11-coupled receptors to RHOA activation. May be an important regulator of processes involved in axon and dendrite formation. In neurons seems to be an exchange factor primarily for RAC1. Involved in skeletal myogenesis. This is Rho guanine nucleotide exchange factor 25 (Arhgef25) from Rattus norvegicus (Rat).